Consider the following 123-residue polypeptide: Alpha-ketoglutarate dehydrogenase subunit 4, mitochondrial (123 aa).

Residues 1–8 (MIATPIRL) constitute a mitochondrion transit peptide.

Belongs to the alpha-ketoglutarate dehydrogenase component 4 family. In terms of assembly, component of the 2-oxoglutarate dehydrogenase complex (OGDC), also called alpha-ketoglutarate dehydrogenase (KGDH) complex. The copmplex is composed of the catalytic subunits OGDH (2-oxoglutarate dehydrogenase KGD1; also called E1 subunit), DLST (dihydrolipoamide succinyltransferase KGD2; also called E2 subunit) and DLD (dihydrolipoamide dehydrogenase LPD1; also called E3 subunit), and the assembly factor KGD4. Within OGDC, interacts (via N-terminus) with E3 subunit and (via C-terminus) with the complex core formed by E1 and E2 subunits.

It localises to the mitochondrion. Functionally, molecular adapter that is necessary to a form a stable 2-oxoglutarate dehydrogenase enzyme complex (OGDC). Required for incorporation of the E3 subunit (LPD1) into the E1-E2 core (KGD1-KGD2) of mitochondrial OGDC, and acting as a stability factor for the fully assembled complex. This chain is Alpha-ketoglutarate dehydrogenase subunit 4, mitochondrial, found in Saccharomyces cerevisiae (strain ATCC 204508 / S288c) (Baker's yeast).